The chain runs to 172 residues: Large ribosomal subunit protein uL10 (172 aa).

It belongs to the universal ribosomal protein uL10 family. Part of the ribosomal stalk of the 50S ribosomal subunit. The N-terminus interacts with L11 and the large rRNA to form the base of the stalk. The C-terminus forms an elongated spine to which L12 dimers bind in a sequential fashion forming a multimeric L10(L12)X complex.

Its function is as follows. Forms part of the ribosomal stalk, playing a central role in the interaction of the ribosome with GTP-bound translation factors. The polypeptide is Large ribosomal subunit protein uL10 (Methylobacterium radiotolerans (strain ATCC 27329 / DSM 1819 / JCM 2831 / NBRC 15690 / NCIMB 10815 / 0-1)).